The primary structure comprises 449 residues: Keratin, type I cuticular Ha7 (449 aa).

A head region spans residues 1-104; that stretch reads MTSFYSTSSC…YGKNTLNGHE (104 aa). The region spanning 104-415 is the IF rod domain; that stretch reads EKETMKFLND…NLLESEDCKL (312 aa). Residues 105 to 139 are coil 1A; sequence KETMKFLNDRLANYLEKVRQLEQENAELETTLLER. Residues 140–150 are linker 1; sequence SKCHESTVCPD. Residues 151–251 form a coil 1B region; sequence YQSYFRTIEE…HEQEVKILRS (101 aa). A linker 12 region spans residues 252–267; sequence QLGEKFRIELDIEPTI. The segment at 268–411 is coil 2; that stretch reads DLNRVLGEMR…ATYRNLLESE (144 aa). The interval 416–449 is tail; it reads PCNPCSTPASCTSCPSCGPVTGGSPSGHGASMGR.

This sequence belongs to the intermediate filament family.

The sequence is that of Keratin, type I cuticular Ha7 (KRT37) from Homo sapiens (Human).